The chain runs to 513 residues: uncharacterized protein (513 aa).

Residues 11–219 (HLEVERKFDV…SKLARVLGAT (209 aa)) form the CYTH domain. The region spanning 228–506 (PQPPADPVHR…LEAALRKLDK (279 aa)) is the CHAD domain.

This is an uncharacterized protein from Mycobacterium tuberculosis (strain CDC 1551 / Oshkosh).